Reading from the N-terminus, the 327-residue chain is Putative cyclin-dependent kinase F-2 (327 aa).

Residues 4-295 (YECLGKIGEG…AADALRCAWF (292 aa)) form the Protein kinase domain. Residues 10-18 (IGEGAAGVV) and K33 contribute to the ATP site. The Proton acceptor role is filled by D134. Position 167 is a phosphothreonine (T167).

It belongs to the protein kinase superfamily. CMGC Ser/Thr protein kinase family. CDC2/CDKX subfamily.

The enzyme catalyses L-seryl-[protein] + ATP = O-phospho-L-seryl-[protein] + ADP + H(+). It catalyses the reaction L-threonyl-[protein] + ATP = O-phospho-L-threonyl-[protein] + ADP + H(+). It carries out the reaction [DNA-directed RNA polymerase] + ATP = phospho-[DNA-directed RNA polymerase] + ADP + H(+). In Oryza sativa subsp. japonica (Rice), this protein is Putative cyclin-dependent kinase F-2 (CDKF-2).